The chain runs to 485 residues: MSNKNFPLIFERSKEGRTSYSLPELDVESFDLEAELGSEYVRQTPPELPEVSELDIIRHYTGLSNRNYGVDSGFYPLGSCTMKYNPKINEDIARLDGFSHIHPYQDVSTVQGAMAMMFDLQESLKEITGMHEVSLQSAAGAQGEWTALMMIRAFHESRGDYGRTKVIVPDSAHGTNPASAAVAGFEAVTVKSNQEGLVDLDDLRQVVGEDTAALMLTNPNTLGLFEKDILTMAEIVHEAGGKLYYDGANLNAIMGYVRPGDMGFDAVHLNLHKTFTGPHGGGGPGSGPVGVSEELAAFLPKPLIVKKNDGYDFDENRPQSIGRVKPFYGNFGINLRAYTYIRTMGAEGLKKVSEYAVLNANYMMRQLEDVFELPYPQHCKHEFVLSGSKQKKLGVRTLDMAKRLLDFGYHPPTIYFPLNVEEGLMVEPTETESKETLDGFIDTMRTIAKEVEENPEIVQEAPHQTIVKRMDETRAARKPVLRYHP.

At K273 the chain carries N6-(pyridoxal phosphate)lysine.

The protein belongs to the GcvP family. C-terminal subunit subfamily. The glycine cleavage system is composed of four proteins: P, T, L and H. In this organism, the P 'protein' is a heterodimer of two subunits. Requires pyridoxal 5'-phosphate as cofactor.

The catalysed reaction is N(6)-[(R)-lipoyl]-L-lysyl-[glycine-cleavage complex H protein] + glycine + H(+) = N(6)-[(R)-S(8)-aminomethyldihydrolipoyl]-L-lysyl-[glycine-cleavage complex H protein] + CO2. In terms of biological role, the glycine cleavage system catalyzes the degradation of glycine. The P protein binds the alpha-amino group of glycine through its pyridoxal phosphate cofactor; CO(2) is released and the remaining methylamine moiety is then transferred to the lipoamide cofactor of the H protein. This Oceanobacillus iheyensis (strain DSM 14371 / CIP 107618 / JCM 11309 / KCTC 3954 / HTE831) protein is Probable glycine dehydrogenase (decarboxylating) subunit 2.